A 407-amino-acid chain; its full sequence is MTTFSEKEKIQLLADIVELQTENNNEIDVCNYLKDLFDKYDIKSEILKVNEHRANIVAEIGNGSPILALSGHMDVVDAGNQDNWTYPPFQLTEKAGKLYGRGTTDMKGGLMALVITLIELKEQNQLPQGTIRLLATAGEEKEQEGAKLLADKGYLDDVDGLIIAEPTGSGIYYAHKGSMSCKVTATGKAVHSSVPFIGDNAIDTLLEFYNQFKEKYSELKKHDTKHELDVAPMFKSLIGKEISEEDANYASGLTAVCSIINGGKQFNSVPDEASLEFNVRPVPEYDNDFIESFFQNIINDVDSNKLSLDIPSNHRPVTSDKNSKLITTIKDVASSYVEQDEIFVSALVGATDASSFLGDNKDNVDLAIFGPGNPLMAHQIDEYIEKDMYLKYIDIFKEASIQYLKEK.

Zn(2+) is bound at residue H72. The active site involves D74. Position 105 (D105) interacts with Zn(2+). The active-site Proton acceptor is E139. 3 residues coordinate Zn(2+): E140, E165, and H378.

The protein belongs to the peptidase M20A family. It depends on Zn(2+) as a cofactor. Requires Co(2+) as cofactor.

The enzyme catalyses N-succinyl-(2S,6S)-2,6-diaminopimelate + H2O = (2S,6S)-2,6-diaminopimelate + succinate. It functions in the pathway amino-acid biosynthesis; L-lysine biosynthesis via DAP pathway; LL-2,6-diaminopimelate from (S)-tetrahydrodipicolinate (succinylase route): step 3/3. The polypeptide is Probable succinyl-diaminopimelate desuccinylase (dapE) (Staphylococcus aureus (strain N315)).